Reading from the N-terminus, the 567-residue chain is Probable serine/threonine-protein kinase WNK6 (567 aa).

In terms of domain architecture, Protein kinase spans 28–285 (IRYKEVIGKG…AKELLLDPFL (258 aa)). ATP contacts are provided by residues 108–111 (TELF) and Lys-158. Asp-175 functions as the Proton acceptor in the catalytic mechanism. Residues 499 to 509 (VDATKGEDKSS) show a composition bias toward basic and acidic residues. A disordered region spans residues 499 to 528 (VDATKGEDKSSIQEVEEATEPVSLEEEERL). Residues 512–525 (EVEEATEPVSLEEE) show a composition bias toward acidic residues. Residues 519–553 (PVSLEEEERLRQELEEIEAKYQEDMKEIATKREEA) are a coiled coil.

This sequence belongs to the protein kinase superfamily. Ser/Thr protein kinase family. WNK subfamily.

The catalysed reaction is L-seryl-[protein] + ATP = O-phospho-L-seryl-[protein] + ADP + H(+). It catalyses the reaction L-threonyl-[protein] + ATP = O-phospho-L-threonyl-[protein] + ADP + H(+). Its function is as follows. May regulate flowering time by modulating the photoperiod pathway. This chain is Probable serine/threonine-protein kinase WNK6 (WNK6), found in Arabidopsis thaliana (Mouse-ear cress).